We begin with the raw amino-acid sequence, 437 residues long: Epsilon-sarcoglycan (437 aa).

The Extracellular portion of the chain corresponds to 1–317; the sequence is MQLPRWWELG…LKSRDYYTDF (317 aa). The N-linked (GlcNAc...) asparagine glycan is linked to N200. The chain crosses the membrane as a helical span at residues 318–338; sequence LITLAVPSAVALVLFLILAYI. Residues 339 to 437 are Cytoplasmic-facing; that stretch reads MCCRREGVEK…QQQTTGKWYP (99 aa).

It belongs to the sarcoglycan alpha/epsilon family. N-glycosylated. Post-translationally, ubiquitinated, leading to its degradation by the proteasome.

Its subcellular location is the cell membrane. The protein resides in the sarcolemma. The protein localises to the cytoplasm. It is found in the cytoskeleton. It localises to the cell projection. Its subcellular location is the dendrite. The protein resides in the golgi apparatus. Its function is as follows. Component of the sarcoglycan complex, a subcomplex of the dystrophin-glycoprotein complex which forms a link between the F-actin cytoskeleton and the extracellular matrix. This chain is Epsilon-sarcoglycan, found in Pongo abelii (Sumatran orangutan).